A 552-amino-acid chain; its full sequence is HTH-type transcriptional regulator SgrR (552 aa).

One can recognise an HTH marR-type domain in the interval 1 to 116 (MPSARLQQQF…LVSHLGRSFR (116 aa)). Positions 26 to 49 (LNELAALLSCSRRHMRTLLNTMQD) form a DNA-binding region, H-T-H motif. A solute-binding region spans residues 163–492 (ELEADIAHHW…IDWQADAARW (330 aa)).

Functionally, activates the small RNA gene sgrS under glucose-phosphate stress conditions as well as yfdZ. Represses its own transcription under both stress and non-stress conditions. Might act as a sensor of the intracellular accumulation of phosphoglucose by binding these molecules in its C-terminal solute-binding domain. The polypeptide is HTH-type transcriptional regulator SgrR (Shigella dysenteriae serotype 1 (strain Sd197)).